The primary structure comprises 412 residues: MQPSSLLPLALCLLAAPASALVRIPLHKFTSIRRTMSEVGGSVEDLIAKGPVSKYSQAVPAVTEGPIPEVLKNYMDAQYYGEIGIGTPPQCFTVVFDTGSSNLWVPSIHCKLLDIACWIHHKYNSDKSSTYVKNGTSFDIHYGSGSLSGYLSQDTVSVPCQSASSASALGGVKVERQVFGEATKQPGITFIAAKFDGILGMAYPRISVNNVLPVFDNLMQQKLVDQNIFSFYLSRDPDAQPGGELMLGGTDSKYYKGSLSYLNVTRKAYWQVHLDQVEVASGLTLCKEGCEAIVDTGTSLMVGPVDEVRELQKAIGAVPLIQGEYMIPCEKVSTLPAITLKLGGKGYKLSPEDYTLKVSQAGKTLCLSGFMGMDIPPPSGPLWILGDVFIGRYYTVFDRDNNRVGFAEAARL.

Residues 1–20 form the signal peptide; sequence MQPSSLLPLALCLLAAPASA. Positions 21-64 are cleaved as a propeptide — activation peptide; sequence LVRIPLHKFTSIRRTMSEVGGSVEDLIAKGPVSKYSQAVPAVTE. O-linked (GalNAc...) threonine glycosylation occurs at Thr-63. Residues 79-407 form the Peptidase A1 domain; sequence YYGEIGIGTP…DRDNNRVGFA (329 aa). Disulfide bonds link Cys-91–Cys-160 and Cys-110–Cys-117. Residue Asp-97 is part of the active site. 2 N-linked (GlcNAc...) asparagine glycosylation sites follow: Asn-134 and Asn-263. A disulfide bridge links Cys-286 with Cys-290. Asp-295 is an active-site residue. Cysteines 329 and 366 form a disulfide.

Belongs to the peptidase A1 family. In terms of assembly, consists of a light chain and a heavy chain. Interacts with ADAM30; this leads to activation of CTSD. Interacts with GRN; stabilizes CTSD; increases its proteolytic activity. Post-translationally, N- and O-glycosylated. In terms of processing, undergoes proteolytic cleavage and activation by ADAM30. As well as the major heavy chain which starts at Leu-169, 2 minor forms starting at Gly-170 and Gly-171 have been identified. An additional form starting at Ala-168 has also been identified. In terms of tissue distribution, expressed in the aorta extracellular space (at protein level). Expressed in liver (at protein level).

The protein resides in the lysosome. It is found in the melanosome. Its subcellular location is the secreted. It localises to the extracellular space. The catalysed reaction is Specificity similar to, but narrower than, that of pepsin A. Does not cleave the 4-Gln-|-His-5 bond in B chain of insulin.. In terms of biological role, acid protease active in intracellular protein breakdown. Plays a role in APP processing following cleavage and activation by ADAM30 which leads to APP degradation. Involved in the pathogenesis of several diseases such as breast cancer and possibly Alzheimer disease. This is Cathepsin D (CTSD) from Homo sapiens (Human).